A 441-amino-acid chain; its full sequence is CBL-interacting serine/threonine-protein kinase 6 (441 aa).

The region spanning 24–278 (YELGRLLGHG…IEKVMDSPWF (255 aa)) is the Protein kinase domain. Residues 30–38 (LGHGTFAKV) and K53 contribute to the ATP site. The active-site Proton acceptor is D146. The interval 164–193 (DFGLSAFTEHLKQDGLLHTTCGTPAYVAPE) is activation loop. S168 carries the phosphoserine modification. T182 carries the post-translational modification Phosphothreonine. In terms of domain architecture, NAF spans 310–334 (EETETLNAFHIIALSEGFDLSPLFE). The tract at residues 341-371 (KREMRFATSRPASSVISSLEEAARVGNKFDV) is PPI.

It belongs to the protein kinase superfamily. CAMK Ser/Thr protein kinase family. SNF1 subfamily. In terms of assembly, part of a K(+)-channel calcium-sensing kinase/phosphatase complex composed by a calcium sensor CBL (CBL1, CBL2, CBL3 or CBL9), a kinase CIPK (CIPK6, CIPK16 or CIPK23), a phosphatase PP2C (AIP1) and a K(+)-channel (AKT1). Interacts with AKT1, AKT2,CBL1, CBL2, CBL3, CBL4/SOS3 and CBL9. The cofactor is Mn(2+). In terms of processing, autophosphorylated. As to expression, expressed in roots and shoots.

The protein resides in the endoplasmic reticulum. The catalysed reaction is L-seryl-[protein] + ATP = O-phospho-L-seryl-[protein] + ADP + H(+). The enzyme catalyses L-threonyl-[protein] + ATP = O-phospho-L-threonyl-[protein] + ADP + H(+). CIPK serine-threonine protein kinases interact with CBL proteins. Binding of a CBL protein to the regulatory NAF domain of CIPK protein lead to the activation of the kinase in a calcium-dependent manner. Downstream of CBL1, CBL2, CBL3 and CBL9, regulates by phosphorylation the K(+) conductance and uptake of AKT1. Binds to CBL4 to modulate AKT2 activity by promoting a kinase interaction-dependent but phosphorylation-independent translocation of the channel to the plasma membrane. In Arabidopsis thaliana (Mouse-ear cress), this protein is CBL-interacting serine/threonine-protein kinase 6 (CIPK6).